We begin with the raw amino-acid sequence, 96 residues long: Small ribosomal subunit protein bS6 (96 aa).

Belongs to the bacterial ribosomal protein bS6 family.

Binds together with bS18 to 16S ribosomal RNA. In Streptococcus mutans serotype c (strain ATCC 700610 / UA159), this protein is Small ribosomal subunit protein bS6.